The primary structure comprises 288 residues: DegV domain-containing protein MYPU_3590 (288 aa).

Positions 3–275 (IAIVIDSSSG…LGAIAISLVK (273 aa)) constitute a DegV domain. Residues Ser61 and Ser92 each contribute to the hexadecanoate site.

Functionally, may bind long-chain fatty acids, such as palmitate, and may play a role in lipid transport or fatty acid metabolism. The polypeptide is DegV domain-containing protein MYPU_3590 (Mycoplasmopsis pulmonis (strain UAB CTIP) (Mycoplasma pulmonis)).